The chain runs to 258 residues: MDELVIAGRSFSSRLMVGTGKFASNSLMADALAASGSQIVTVALRRVDIDRPEDDLLAHIDRDKYLLLPNTSGARDADEAVRLARLARAAGCEPWVKLEVTPDPYYLLPDPIETLKAAEILVKEGFVVLPYINADPVLAKHLQEAGTATVMPLGAPIGTNKGVRTRDNIAIIIEQAIVPVVVDAGLGAPSHVAEAMEMGADAVLVNTALAVTPDPAGMANAFRLGVEAGRRAFLAGLPAQQQKAEASSPLTGFLRDEQ.

The active-site Schiff-base intermediate with DXP is lysine 97. 1-deoxy-D-xylulose 5-phosphate contacts are provided by residues glycine 158, 184–185, and 206–207; these read AG and NT.

Belongs to the ThiG family. In terms of assembly, homotetramer. Forms heterodimers with either ThiH or ThiS.

Its subcellular location is the cytoplasm. The enzyme catalyses [ThiS sulfur-carrier protein]-C-terminal-Gly-aminoethanethioate + 2-iminoacetate + 1-deoxy-D-xylulose 5-phosphate = [ThiS sulfur-carrier protein]-C-terminal Gly-Gly + 2-[(2R,5Z)-2-carboxy-4-methylthiazol-5(2H)-ylidene]ethyl phosphate + 2 H2O + H(+). Its pathway is cofactor biosynthesis; thiamine diphosphate biosynthesis. In terms of biological role, catalyzes the rearrangement of 1-deoxy-D-xylulose 5-phosphate (DXP) to produce the thiazole phosphate moiety of thiamine. Sulfur is provided by the thiocarboxylate moiety of the carrier protein ThiS. In vitro, sulfur can be provided by H(2)S. This is Thiazole synthase 1 from Syntrophotalea carbinolica (strain DSM 2380 / NBRC 103641 / GraBd1) (Pelobacter carbinolicus).